The chain runs to 115 residues: SPbeta prophage-derived uncharacterized protein YoqS (115 aa).

This chain is SPbeta prophage-derived uncharacterized protein YoqS (yoqS), found in Bacillus subtilis (strain 168).